The sequence spans 497 residues: Vacuolar-processing enzyme (497 aa).

Residues 1–31 (METHKSLLFFTNYVLFLVFTLSFLPIPGLLA) form the signal peptide. H180 is a catalytic residue. The active-site Nucleophile is the C222. C255 and C269 are disulfide-bonded. Residues N320 and N374 are each glycosylated (N-linked (GlcNAc...) asparagine). Cystine bridges form between C433–C463 and C445–C480.

The protein belongs to the peptidase C13 family.

Functionally, asparagine-specific endopeptidase involved in the processing of vacuolar seed protein precursors into the mature forms. This is Vacuolar-processing enzyme from Ricinus communis (Castor bean).